The following is a 477-amino-acid chain: MSDRSDPTHAIWQKVLAALTADDRITPQLHGFISLVEPKGVMTGTLYLEVPNDLTRGMLEQRIRVPLLNAIGSLDEAAGVSNFAIVVNPEIAQDAFAQHPEPAAEQPYIETPTITAPTDNPGLPASPSRGDSRLNPKYGFDTFVIGGSNRFAHAAAVAVAEAPAKAYNPLFIYGDSGLGKTHLLHAIGHYAISLYPGIRVRYVSSEEFTNDFINSIANNRSSLFQSRYRDNDILLIDDIQFLQGKDSTQEAFFHTFNTLHDHNKQVVITSDLPPKHLTGFEDRMRSRFEWGLITDVQAPDLETRIAILRKKAQSEKLQVPDDILEYMATKVTSNIRELEGTLIRVTAFASLNKTPVDLALVQTVLKDLITLDEDNVIAPVDIINHTAAYFKLTVDDLYGSSRSQAVATARQIAMYLCRELTNLSLPKIGQLFGNRDHTTVMYANKKITELMKERRSIYNQVTELTSRIKQNHRYGKM.

Positions 1 to 87 (MSDRSDPTHA…AGVSNFAIVV (87 aa)) are domain I, interacts with DnaA modulators. The segment at 87 to 132 (VNPEIAQDAFAQHPEPAAEQPYIETPTITAPTDNPGLPASPSRGDS) is domain II. The tract at residues 112–131 (PTITAPTDNPGLPASPSRGD) is disordered. Residues 133–349 (RLNPKYGFDT…GTLIRVTAFA (217 aa)) are domain III, AAA+ region. Positions 177, 179, 180, and 181 each coordinate ATP. The interval 350–477 (SLNKTPVDLA…IKQNHRYGKM (128 aa)) is domain IV, binds dsDNA.

This sequence belongs to the DnaA family. Oligomerizes as a right-handed, spiral filament on DNA at oriC.

The protein localises to the cytoplasm. Its function is as follows. Plays an essential role in the initiation and regulation of chromosomal replication. ATP-DnaA binds to the origin of replication (oriC) to initiate formation of the DNA replication initiation complex once per cell cycle. Binds the DnaA box (a 9 base pair repeat at the origin) and separates the double-stranded (ds)DNA. Forms a right-handed helical filament on oriC DNA; dsDNA binds to the exterior of the filament while single-stranded (ss)DNA is stabiized in the filament's interior. The ATP-DnaA-oriC complex binds and stabilizes one strand of the AT-rich DNA unwinding element (DUE), permitting loading of DNA polymerase. After initiation quickly degrades to an ADP-DnaA complex that is not apt for DNA replication. Binds acidic phospholipids. This is Chromosomal replication initiator protein DnaA from Clavibacter michiganensis subsp. michiganensis (strain NCPPB 382).